A 245-amino-acid chain; its full sequence is Lactate utilization protein A 1 (245 aa).

This sequence belongs to the LutA/YkgE family.

Its function is as follows. Is involved in L-lactate degradation and allows cells to grow with lactate as the sole carbon source. This is Lactate utilization protein A 1 from Bacillus mycoides (strain KBAB4) (Bacillus weihenstephanensis).